The primary structure comprises 855 residues: Valine--tRNA ligase (855 aa).

The short motif at 44–54 (PNVTGVLHIGH) is the 'HIGH' region element. The 'KMSKS' region motif lies at 524 to 528 (KMSKT). Residue lysine 527 participates in ATP binding. Residues 797-827 (KVEEDPARKQKEREQLEKNIANSKRQLGDEV) are a coiled coil.

It belongs to the class-I aminoacyl-tRNA synthetase family. ValS type 1 subfamily. In terms of assembly, monomer.

The protein resides in the cytoplasm. The enzyme catalyses tRNA(Val) + L-valine + ATP = L-valyl-tRNA(Val) + AMP + diphosphate. Its function is as follows. Catalyzes the attachment of valine to tRNA(Val). As ValRS can inadvertently accommodate and process structurally similar amino acids such as threonine, to avoid such errors, it has a 'posttransfer' editing activity that hydrolyzes mischarged Thr-tRNA(Val) in a tRNA-dependent manner. The sequence is that of Valine--tRNA ligase from Solibacter usitatus (strain Ellin6076).